Here is a 1369-residue protein sequence, read N- to C-terminus: Xanthine dehydrogenase (1369 aa).

The 2Fe-2S ferredoxin-type domain maps to 20 to 106 (GEAVVYVNGV…GMHIITVEGI (87 aa)). 8 residues coordinate [2Fe-2S] cluster: C58, C63, C66, C88, C128, C131, C164, and C166. An FAD-binding PCMH-type domain is found at 265–450 (NGFNGIRWYR…LSVILPWTRP (186 aa)). FAD-binding positions include 293–300 (LIIGNSEV), F373, 383–387 (SVGGN), D396, L440, and K458. Residues Q804 and F835 each coordinate Mo-molybdopterin. Substrate-binding residues include E839 and R917. Residue R949 participates in Mo-molybdopterin binding. Positions 951 and 1047 each coordinate substrate. A1116 is a Mo-molybdopterin binding site. The Proton acceptor role is filled by E1305.

It belongs to the xanthine dehydrogenase family. Homodimer. [2Fe-2S] cluster is required as a cofactor. Requires FAD as cofactor. The cofactor is Mo-molybdopterin.

It catalyses the reaction xanthine + NAD(+) + H2O = urate + NADH + H(+). It carries out the reaction hypoxanthine + NAD(+) + H2O = xanthine + NADH + H(+). Key enzyme involved in purine catabolism. Catalyzes the oxidation of hypoxanthine to xanthine and the oxidation of xanthine to urate. This is Xanthine dehydrogenase (XDH) from Oryza sativa subsp. japonica (Rice).